The chain runs to 209 residues: Small ribosomal subunit protein uS3 (209 aa).

Residues 17–86 enclose the KH type-2 domain; it reads IDEFLEKELR…NPQIEVEEIK (70 aa).

Belongs to the universal ribosomal protein uS3 family. As to quaternary structure, part of the 30S ribosomal subunit.

Functionally, binds the lower part of the 30S subunit head. The sequence is that of Small ribosomal subunit protein uS3 from Thermococcus kodakarensis (strain ATCC BAA-918 / JCM 12380 / KOD1) (Pyrococcus kodakaraensis (strain KOD1)).